A 312-amino-acid polypeptide reads, in one-letter code: Acetyl-coenzyme A carboxylase carboxyl transferase subunit beta (312 aa).

A CoA carboxyltransferase N-terminal domain is found at 24-293 (LWIKCPDSGQ…PHADEVAAPP (270 aa)). The tract at residues 286–312 (ADEVAAPPPPDVEGPPPAAEPVALPPA) is disordered. The span at 291–312 (APPPPDVEGPPPAAEPVALPPA) shows a compositional bias: pro residues.

This sequence belongs to the AccD/PCCB family. In terms of assembly, acetyl-CoA carboxylase is a heterohexamer composed of biotin carboxyl carrier protein (AccB), biotin carboxylase (AccC) and two subunits each of ACCase subunit alpha (AccA) and ACCase subunit beta (AccD).

The protein localises to the cytoplasm. It catalyses the reaction N(6)-carboxybiotinyl-L-lysyl-[protein] + acetyl-CoA = N(6)-biotinyl-L-lysyl-[protein] + malonyl-CoA. It participates in lipid metabolism; malonyl-CoA biosynthesis; malonyl-CoA from acetyl-CoA: step 1/1. In terms of biological role, component of the acetyl coenzyme A carboxylase (ACC) complex. Biotin carboxylase (BC) catalyzes the carboxylation of biotin on its carrier protein (BCCP) and then the CO(2) group is transferred by the transcarboxylase to acetyl-CoA to form malonyl-CoA. In Afipia carboxidovorans (strain ATCC 49405 / DSM 1227 / KCTC 32145 / OM5) (Oligotropha carboxidovorans), this protein is Acetyl-coenzyme A carboxylase carboxyl transferase subunit beta.